Here is a 498-residue protein sequence, read N- to C-terminus: 4-aminobutyrate aminotransferase (498 aa).

164–165 provides a ligand contact to pyridoxal 5'-phosphate; it reads GS. Arg222 contributes to the substrate binding site. Position 356 is an N6-(pyridoxal phosphate)lysine (Lys356). Thr381 lines the pyridoxal 5'-phosphate pocket.

It belongs to the class-III pyridoxal-phosphate-dependent aminotransferase family. Homodimer. It depends on pyridoxal 5'-phosphate as a cofactor.

Its subcellular location is the cytoplasm. It carries out the reaction 4-aminobutanoate + 2-oxoglutarate = succinate semialdehyde + L-glutamate. Functionally, deaminates gamma-aminobutyric acid (GABA) to succinate-semialdehyde, which in turn is converted to succinate by the succinate semialdehyde dehydrogenase. Required for the degradation of GABA, which is important for utilization of GABA as nitrogen source. The sequence is that of 4-aminobutyrate aminotransferase (gatA) from Emericella nidulans (strain FGSC A4 / ATCC 38163 / CBS 112.46 / NRRL 194 / M139) (Aspergillus nidulans).